We begin with the raw amino-acid sequence, 205 residues long: Ras-related protein RABD1 (205 aa).

S2 carries the post-translational modification N-acetylserine. Residues 15–23 (GDSSVGKSC), 33–40 (YIDSYIST), 63–67 (DTAGQ), 121–124 (NKND), and 151–153 (SAK) each bind GTP. The Effector region signature appears at 37–45 (YISTIGVDF). Polar residues-rich tracts occupy residues 174–186 (GSQT…SGPG) and 194–205 (PIQQNNGGCCGQ). Positions 174-205 (GSQTNANKTSGPGTVQMKGQPIQQNNGGCCGQ) are disordered. Residues C202 and C203 are each lipidated (S-geranylgeranyl cysteine).

This sequence belongs to the small GTPase superfamily. Rab family. As to quaternary structure, does not interact with GC5. Interacts with XI-2/MYA2.

The protein resides in the golgi apparatus. The protein localises to the trans-Golgi network membrane. Its subcellular location is the golgi apparatus membrane. In terms of biological role, protein transport. Regulator of membrane traffic from the Golgi apparatus towards the endoplasmic reticulum (ER). In Arabidopsis thaliana (Mouse-ear cress), this protein is Ras-related protein RABD1 (RABD1).